Here is an 81-residue protein sequence, read N- to C-terminus: WAP four-disulfide core domain protein 13 (81 aa).

Positions 1–22 (MRPVSPLQLLLVLSLAPQPVLG) are cleaved as a signal peptide. The WAP domain occupies 31 to 74 (YILEPPPCRSEPGACNMFCTQQEECPEPLQCCSAYCGIVCTSNQ). 4 disulfide bridges follow: C38/C62, C45/C66, C49/C61, and C55/C70.

Its subcellular location is the secreted. Functionally, putative acid-stable proteinase inhibitor. This is WAP four-disulfide core domain protein 13 (Wfdc13) from Mus musculus (Mouse).